The sequence spans 750 residues: Photosystem I P700 chlorophyll a apoprotein A1 (750 aa).

The next 8 helical transmembrane spans lie at 70 to 93 (VFSAHFGQLSIIFLWLSGMYFHGA), 156 to 179 (LYCTAIGALVFAALMLFAGWFHYH), 195 to 219 (LNHHLAGLLGLGSLSWAGHQVHVSL), 291 to 309 (IAHHHLAIAILFLVAGHMY), 346 to 369 (WHAQLSLNLAMLGSLTIVVAHHMY), 385 to 411 (LSLFTHHMWIGGFLIVGAAAHAAIFMV), 433 to 455 (AIISHLNWVCIFLGFHSFGLYIH), and 531 to 549 (FLVHHIHAFTIHVTVLILL). Cys573 and Cys582 together coordinate [4Fe-4S] cluster. The next 2 helical transmembrane spans lie at 589–610 (HVFLGLFWMYNAISVVIFHFSW) and 664–686 (LSAYGLFFLGAHFVWAFSLMFLF). His675 contacts chlorophyll a'. Chlorophyll a is bound by residues Met683 and Tyr691. Residue Trp692 participates in phylloquinone binding. Residues 724–744 (AVGVTHYLLGGIATTWAFFLA) traverse the membrane as a helical segment.

It belongs to the PsaA/PsaB family. The PsaA/B heterodimer binds the P700 chlorophyll special pair and subsequent electron acceptors. PSI consists of a core antenna complex that captures photons, and an electron transfer chain that converts photonic excitation into a charge separation. The eukaryotic PSI reaction center is composed of at least 11 subunits. It depends on P700 is a chlorophyll a/chlorophyll a' dimer, A0 is one or more chlorophyll a, A1 is one or both phylloquinones and FX is a shared 4Fe-4S iron-sulfur center. as a cofactor.

The protein resides in the plastid. The protein localises to the chloroplast thylakoid membrane. The catalysed reaction is reduced [plastocyanin] + hnu + oxidized [2Fe-2S]-[ferredoxin] = oxidized [plastocyanin] + reduced [2Fe-2S]-[ferredoxin]. PsaA and PsaB bind P700, the primary electron donor of photosystem I (PSI), as well as the electron acceptors A0, A1 and FX. PSI is a plastocyanin-ferredoxin oxidoreductase, converting photonic excitation into a charge separation, which transfers an electron from the donor P700 chlorophyll pair to the spectroscopically characterized acceptors A0, A1, FX, FA and FB in turn. Oxidized P700 is reduced on the lumenal side of the thylakoid membrane by plastocyanin. The protein is Photosystem I P700 chlorophyll a apoprotein A1 of Populus trichocarpa (Western balsam poplar).